The primary structure comprises 108 residues: Large ribosomal subunit protein bL21 (108 aa).

It belongs to the bacterial ribosomal protein bL21 family. In terms of assembly, part of the 50S ribosomal subunit. Contacts protein L20.

Its function is as follows. This protein binds to 23S rRNA in the presence of protein L20. The sequence is that of Large ribosomal subunit protein bL21 from Orientia tsutsugamushi (strain Ikeda) (Rickettsia tsutsugamushi).